We begin with the raw amino-acid sequence, 273 residues long: WIMGHMVNAIAQIDEFVNLGANSIETDVSFDKNANPEYTYHGIPCDCGRTCTKWEYFNTFLGGLRKATTPGDSKYHEKLVLVVFDLKTGSLYDNQAYDAGTKLAKSLLQNYWNKGNNGGRAYIVLSIPNLDHYKLITGFKETLTKEEHPELMDKVGYDFSGNDDIGDVAKAYKKAGVTGHVWQSDGITNCLLRGLDRVRKAVANRDSSNGYINKVYYWTVDKRASTSDALDAGVDGIMTNYPDVIADVLSESVYTAKFRIATYDDNPWETFKN.

His5 is a catalytic residue. The Mg(2+) site is built by Glu25 and Asp27. The active-site Nucleophile is the His41. 2 disulfide bridges follow: Cys45-Cys51 and Cys47-Cys190. Asp85 serves as a coordination point for Mg(2+).

Belongs to the arthropod phospholipase D family. Class II subfamily. Mg(2+) serves as cofactor. As to expression, expressed by the venom gland.

It localises to the secreted. It catalyses the reaction an N-(acyl)-sphingosylphosphocholine = an N-(acyl)-sphingosyl-1,3-cyclic phosphate + choline. It carries out the reaction an N-(acyl)-sphingosylphosphoethanolamine = an N-(acyl)-sphingosyl-1,3-cyclic phosphate + ethanolamine. The enzyme catalyses a 1-acyl-sn-glycero-3-phosphocholine = a 1-acyl-sn-glycero-2,3-cyclic phosphate + choline. The catalysed reaction is a 1-acyl-sn-glycero-3-phosphoethanolamine = a 1-acyl-sn-glycero-2,3-cyclic phosphate + ethanolamine. Functionally, dermonecrotic toxins cleave the phosphodiester linkage between the phosphate and headgroup of certain phospholipids (sphingolipid and lysolipid substrates), forming an alcohol (often choline) and a cyclic phosphate. This toxin acts on sphingomyelin (SM). It may also act on ceramide phosphoethanolamine (CPE), lysophosphatidylcholine (LPC) and lysophosphatidylethanolamine (LPE), but not on lysophosphatidylserine (LPS), and lysophosphatidylglycerol (LPG). It acts by transphosphatidylation, releasing exclusively cyclic phosphate products as second products. Induces dermonecrosis, hemolysis, increased vascular permeability, edema, inflammatory response, and platelet aggregation. In Loxosceles sabina (Tucson recluse spider), this protein is Dermonecrotic toxin LsaSicTox-alphaIB1aii.